The chain runs to 209 residues: Large ribosomal subunit protein uL3 (209 aa).

Positions 122–151 (AIKRHGQSRGPMSHGSRYHRRPGSMGPVDP) are disordered.

This sequence belongs to the universal ribosomal protein uL3 family. As to quaternary structure, part of the 50S ribosomal subunit. Forms a cluster with proteins L14 and L19.

Its function is as follows. One of the primary rRNA binding proteins, it binds directly near the 3'-end of the 23S rRNA, where it nucleates assembly of the 50S subunit. The polypeptide is Large ribosomal subunit protein uL3 (Bacillus velezensis (strain DSM 23117 / BGSC 10A6 / LMG 26770 / FZB42) (Bacillus amyloliquefaciens subsp. plantarum)).